The following is a 547-amino-acid chain: Inositol-tetrakisphosphate 1-kinase 6 (547 aa).

Residue Lys-263 participates in 1D-myo-inositol 1,3,4-trisphosphate binding. Arg-317 and Lys-370 together coordinate ATP. In terms of domain architecture, ATP-grasp spans 327–539 (LEGLSAEGRP…FWDAIKQSYE (213 aa)). Residues His-381 and Lys-415 each coordinate 1D-myo-inositol 1,3,4-trisphosphate. ATP is bound by residues 404 to 415 (QEYIDHGSKIFK), Ser-430, and Ser-450. Mg(2+) contacts are provided by Asp-497, Asp-511, and Asn-513. Asn-513 and Ser-517 together coordinate 1D-myo-inositol 1,3,4-trisphosphate.

This sequence belongs to the ITPK1 family. As to quaternary structure, monomer. The cofactor is Mg(2+).

It carries out the reaction 1D-myo-inositol 3,4,5,6-tetrakisphosphate + ATP = 1D-myo-inositol 1,3,4,5,6-pentakisphosphate + ADP + H(+). It catalyses the reaction 1D-myo-inositol 1,3,4-trisphosphate + ATP = 1D-myo-inositol 1,3,4,5-tetrakisphosphate + ADP + H(+). The catalysed reaction is 1D-myo-inositol 1,3,4-trisphosphate + ATP = 1D-myo-inositol 1,3,4,6-tetrakisphosphate + ADP + H(+). Its function is as follows. Kinase that can phosphorylate various inositol polyphosphate such as Ins(3,4,5,6)P4 or Ins(1,3,4)P3 and participates in phytic acid biosynthesis in developing seeds. Phytic acid is the primary storage form of phosphorus in cereal grains and other plant seeds. The sequence is that of Inositol-tetrakisphosphate 1-kinase 6 from Oryza sativa subsp. indica (Rice).